Here is a 396-residue protein sequence, read N- to C-terminus: Subtilisin-like protease 5 (396 aa).

The first 20 residues, 1-20, serve as a signal peptide directing secretion; the sequence is MTGFFTILSFSLAALSVTNA. Positions 21–116 are excised as a propeptide; sequence AQILSVPKGA…VEPDAIISQH (96 aa). Residues 37–113 form the Inhibitor I9 domain; the sequence is YIVVMKDDTS…VAFVEPDAII (77 aa). In terms of domain architecture, Peptidase S8 spans 125-396; that stretch reads PWGLSRLSNR…SRLLYNGSGR (272 aa). Residues Asp156 and His187 each act as charge relay system in the active site. Residues Asn230 and Asn248 are each glycosylated (N-linked (GlcNAc...) asparagine). Residue Ser342 is the Charge relay system of the active site. The span at 376 to 389 shows a compositional bias: polar residues; that stretch reads PTIRNPGPDTTSRL. Positions 376–396 are disordered; sequence PTIRNPGPDTTSRLLYNGSGR. Asn392 carries an N-linked (GlcNAc...) asparagine glycan.

The protein belongs to the peptidase S8 family.

It localises to the secreted. Its function is as follows. Secreted subtilisin-like serine protease with keratinolytic activity that contributes to pathogenicity. The sequence is that of Subtilisin-like protease 5 (SUB5) from Arthroderma benhamiae (strain ATCC MYA-4681 / CBS 112371) (Trichophyton mentagrophytes).